The primary structure comprises 580 residues: MFAGLQDLGVANGEDLKETLTNCTEPLKAIEQFQTENGVLLPSLQSALPFLDLHGTPRLEFHQSVFDELRDKLLERVSAIASEGKAEERYKKLEDLLEKSFSLVKMPSLQPVVMCVMKHLPKVPEKKLKLVMADKELYRACAVEVKRQIWQDNQALFGDEVSPLLKQYILEKESALFSTELSVLHNFFSPSPKTRRQGEVVQRLTRMVGKNVKLYDMVLQFLRTLFLRTRNVHYCTLRAELLMSLHDLDVGEICTVDPCHKFTWCLDACIRERFVDSKRARELQGFLDGVKKGQEQVLGDLSMILCDPFAINTLALSTVRHLQELVGQETLPRDSPDLLLLLRLLALGQGAWDMIDSQVFKEPKMEVELITRFLPMLMSFLVDDYTFNVDQKLPAEEKAPVSYPNTLPESFTKFLQEQRMACEVGLYYVLHITKQRNKNALLRLLPGLVETFGDLAFGDIFLHLLTGNLALLADEFALEDFCSSLFDGFFLTASPRKENVHRHALRLLIHLHPRVAPSKLEALQKALEPTGQSGEAVKELYSQLGEKLEQLDHRKPSPAQAAETPALELPLPSVPAPAPL.

An N6-acetyllysine modification is found at K519. Positions 548 to 580 are disordered; sequence LEQLDHRKPSPAQAAETPALELPLPSVPAPAPL. At S557 the chain carries Phosphoserine.

It belongs to the NELF-B family. The NELF complex is composed of NELFA, NELFB, NELFCD (isoform NELF-C or isoform NELF-D) and NELFE; the N-terminus of NELFB binds to the NELFA:NELFCD subcomplex. Binds RNA which may help to stabilize the NELF complex on nucleic acid. Interacts with the first BRCT repeat of BRCA1. Interacts with KIAA1191. Interacts with NELFE. Widely expressed. Expressed in heart, brain, lung, placenta, liver, skeletal muscle, kidney and pancreas.

It localises to the nucleus. Its function is as follows. Essential component of the NELF complex, a complex that negatively regulates the elongation of transcription by RNA polymerase II. The NELF complex, which acts via an association with the DSIF complex and causes transcriptional pausing, is counteracted by the P-TEFb kinase complex. May be able to induce chromatin unfolding. Essential for early embryogenesis; plays an important role in maintaining the undifferentiated state of embryonic stem cells (ESCs) by preventing unscheduled expression of developmental genes. Plays a key role in establishing the responsiveness of stem cells to developmental cues; facilitates plasticity and cell fate commitment in ESCs by establishing the appropriate expression level of signaling molecules. Supports the transcription of genes involved in energy metabolism in cardiomyocytes; facilitates the association of transcription initiation factors with the promoters of the metabolism-related genes. (Microbial infection) The NELF complex is involved in HIV-1 latency possibly involving recruitment of PCF11 to paused RNA polymerase II. In vitro, binds weakly to the HIV-1 TAR RNA which is located in the long terminal repeat (LTR) of HIV-1. The chain is Negative elongation factor B (NELFB) from Homo sapiens (Human).